The primary structure comprises 188 residues: Peptidyl-tRNA hydrolase (188 aa).

TRNA is bound at residue Tyr-14. His-19 functions as the Proton acceptor in the catalytic mechanism. TRNA is bound by residues Tyr-64, Asn-66, and Asn-112.

Belongs to the PTH family. Monomer.

It localises to the cytoplasm. The enzyme catalyses an N-acyl-L-alpha-aminoacyl-tRNA + H2O = an N-acyl-L-amino acid + a tRNA + H(+). Its function is as follows. Hydrolyzes ribosome-free peptidyl-tRNAs (with 1 or more amino acids incorporated), which drop off the ribosome during protein synthesis, or as a result of ribosome stalling. In terms of biological role, catalyzes the release of premature peptidyl moieties from peptidyl-tRNA molecules trapped in stalled 50S ribosomal subunits, and thus maintains levels of free tRNAs and 50S ribosomes. This Leuconostoc mesenteroides subsp. mesenteroides (strain ATCC 8293 / DSM 20343 / BCRC 11652 / CCM 1803 / JCM 6124 / NCDO 523 / NBRC 100496 / NCIMB 8023 / NCTC 12954 / NRRL B-1118 / 37Y) protein is Peptidyl-tRNA hydrolase.